The chain runs to 279 residues: Urease accessory protein UreD (279 aa).

It belongs to the UreD family. In terms of assembly, ureD, UreF and UreG form a complex that acts as a GTP-hydrolysis-dependent molecular chaperone, activating the urease apoprotein by helping to assemble the nickel containing metallocenter of UreC. The UreE protein probably delivers the nickel.

It is found in the cytoplasm. Required for maturation of urease via the functional incorporation of the urease nickel metallocenter. This Streptococcus thermophilus (strain CNRZ 1066) protein is Urease accessory protein UreD.